We begin with the raw amino-acid sequence, 208 residues long: Uracil phosphoribosyltransferase (208 aa).

Residues arginine 78, arginine 103, and 130 to 138 (DPMLATGVS) contribute to the 5-phospho-alpha-D-ribose 1-diphosphate site. Residues isoleucine 193 and 198–200 (GDA) each bind uracil. Position 199 (aspartate 199) interacts with 5-phospho-alpha-D-ribose 1-diphosphate.

The protein belongs to the UPRTase family. It depends on Mg(2+) as a cofactor.

The enzyme catalyses UMP + diphosphate = 5-phospho-alpha-D-ribose 1-diphosphate + uracil. It participates in pyrimidine metabolism; UMP biosynthesis via salvage pathway; UMP from uracil: step 1/1. Its activity is regulated as follows. Allosterically activated by GTP. Catalyzes the conversion of uracil and 5-phospho-alpha-D-ribose 1-diphosphate (PRPP) to UMP and diphosphate. The sequence is that of Uracil phosphoribosyltransferase from Thermosipho melanesiensis (strain DSM 12029 / CIP 104789 / BI429).